Here is a 78-residue protein sequence, read N- to C-terminus: Small ribosomal subunit protein bS18 (78 aa).

This sequence belongs to the bacterial ribosomal protein bS18 family. In terms of assembly, part of the 30S ribosomal subunit. Forms a tight heterodimer with protein bS6.

Its function is as follows. Binds as a heterodimer with protein bS6 to the central domain of the 16S rRNA, where it helps stabilize the platform of the 30S subunit. The sequence is that of Small ribosomal subunit protein bS18 from Frankia casuarinae (strain DSM 45818 / CECT 9043 / HFP020203 / CcI3).